The chain runs to 367 residues: tRNA/tmRNA (uracil-C(5))-methyltransferase (367 aa).

S-adenosyl-L-methionine contacts are provided by glutamine 190, tyrosine 218, asparagine 223, glutamate 239, and aspartate 299. Cysteine 324 acts as the Nucleophile in catalysis. Residue glutamate 358 is the Proton acceptor of the active site.

It belongs to the class I-like SAM-binding methyltransferase superfamily. RNA M5U methyltransferase family. TrmA subfamily.

The catalysed reaction is uridine(54) in tRNA + S-adenosyl-L-methionine = 5-methyluridine(54) in tRNA + S-adenosyl-L-homocysteine + H(+). It catalyses the reaction uridine(341) in tmRNA + S-adenosyl-L-methionine = 5-methyluridine(341) in tmRNA + S-adenosyl-L-homocysteine + H(+). Dual-specificity methyltransferase that catalyzes the formation of 5-methyluridine at position 54 (m5U54) in all tRNAs, and that of position 341 (m5U341) in tmRNA (transfer-mRNA). The sequence is that of tRNA/tmRNA (uracil-C(5))-methyltransferase from Yersinia enterocolitica serotype O:8 / biotype 1B (strain NCTC 13174 / 8081).